The following is a 534-amino-acid chain: ATP-dependent rRNA helicase RRP3 (534 aa).

Positions 67-107 (KQQALQKQQKQQKQQEQENANHNQTESSLSSSSSTTSSSIT) are disordered. 2 stretches are compositionally biased toward low complexity: residues 68–80 (QQALQKQQKQQKQ) and 91–107 (TESSLSSSSSTTSSSIT). The Q motif motif lies at 118–146 (KTFKELNLVPDLLESIESMKFTKPTPIQS). Residues 149–320 (IPHALEGKDI…RASLHNPVRV (172 aa)) enclose the Helicase ATP-binding domain. 162 to 169 (AQTGSGKT) provides a ligand contact to ATP. A DEAD box motif is present at residues 268–271 (DEAD). Positions 347 to 492 (ILIHLLNEFM…EDKPPKEVLD (146 aa)) constitute a Helicase C-terminal domain. Composition is skewed to basic and acidic residues over residues 505–517 (AIRQTKEIHDKRN) and 525–534 (NRDDADREER). Residues 505 to 534 (AIRQTKEIHDKRNGGGGRRRNRDDADREER) are disordered.

This sequence belongs to the DEAD box helicase family. DDX47/RRP3 subfamily. Interacts with the SSU processome.

It is found in the nucleus. The catalysed reaction is ATP + H2O = ADP + phosphate + H(+). Functionally, ATP-dependent rRNA helicase required for pre-ribosomal RNA processing. Involved in the maturation of the 35S-pre-rRNA and to its cleavage to mature 18S rRNA. The polypeptide is ATP-dependent rRNA helicase RRP3 (Candida albicans (strain SC5314 / ATCC MYA-2876) (Yeast)).